We begin with the raw amino-acid sequence, 210 residues long: UPF0301 protein OCAR_7326/OCA5_c07920 (210 aa).

It belongs to the UPF0301 (AlgH) family.

This chain is UPF0301 protein OCAR_7326/OCA5_c07920, found in Afipia carboxidovorans (strain ATCC 49405 / DSM 1227 / KCTC 32145 / OM5) (Oligotropha carboxidovorans).